A 377-amino-acid polypeptide reads, in one-letter code: DNA replication and repair protein RecF (377 aa).

Gly30–Thr37 lines the ATP pocket.

Belongs to the RecF family.

It is found in the cytoplasm. Its function is as follows. The RecF protein is involved in DNA metabolism; it is required for DNA replication and normal SOS inducibility. RecF binds preferentially to single-stranded, linear DNA. It also seems to bind ATP. The protein is DNA replication and repair protein RecF of Cytophaga hutchinsonii (strain ATCC 33406 / DSM 1761 / CIP 103989 / NBRC 15051 / NCIMB 9469 / D465).